Consider the following 166-residue polypeptide: Putative transcriptional regulatory protein for hcr operon (166 aa).

Positions 1–155 constitute an HTH marR-type domain; the sequence is MRKHRGKPAN…LIGLLKRLYR (155 aa).

Its function is as follows. May be involved in the regulation of genes for 4-hydroxybenzoyl-CoA reductase. The polypeptide is Putative transcriptional regulatory protein for hcr operon (Thauera aromatica).